We begin with the raw amino-acid sequence, 286 residues long: GTP-binding protein 8 (286 aa).

One can recognise an EngB-type G domain in the interval 105–278; sequence KQPEVCFMGR…RCFIAHVTGK (174 aa). GTP is bound by residues 113–120, 142–146, 160–163, 222–225, and 257–259; these read GRSNVGKS, GHTKK, DMPG, TKID, and VSS. 2 residues coordinate Mg(2+): serine 120 and threonine 144.

The protein belongs to the TRAFAC class TrmE-Era-EngA-EngB-Septin-like GTPase superfamily. EngB GTPase family. The cofactor is Mg(2+).

The protein is GTP-binding protein 8 (gtpbp8) of Danio rerio (Zebrafish).